A 312-amino-acid chain; its full sequence is Cytochrome c biogenesis protein CcsA (312 aa).

8 consecutive transmembrane segments (helical) span residues 18–38 (LGIL…LALF), 48–68 (FFTI…WILS), 73–93 (ISNL…GQLL), 102–122 (IIPV…CFVL), 148–168 (VMLS…VLFI), 216–236 (SILV…IWAN), 250–267 (TWAF…HMRI), and 279–299 (FATS…FLGI).

The protein belongs to the CcmF/CycK/Ccl1/NrfE/CcsA family. As to quaternary structure, may interact with ccs1.

It localises to the cellular thylakoid membrane. Functionally, required during biogenesis of c-type cytochromes (cytochrome c6 and cytochrome f) at the step of heme attachment. The protein is Cytochrome c biogenesis protein CcsA of Prochlorococcus marinus (strain MIT 9515).